A 397-amino-acid chain; its full sequence is Acetate kinase (397 aa).

Asparagine 7 contacts Mg(2+). Lysine 14 provides a ligand contact to ATP. Residue arginine 90 coordinates substrate. Aspartate 147 functions as the Proton donor/acceptor in the catalytic mechanism. Residues 207-211 (HLGNG), 282-284 (DFR), and 330-334 (GLGEN) contribute to the ATP site. Glutamate 383 contacts Mg(2+).

Belongs to the acetokinase family. In terms of assembly, homodimer. Requires Mg(2+) as cofactor. The cofactor is Mn(2+).

The protein resides in the cytoplasm. It carries out the reaction acetate + ATP = acetyl phosphate + ADP. The protein operates within metabolic intermediate biosynthesis; acetyl-CoA biosynthesis; acetyl-CoA from acetate: step 1/2. Functionally, catalyzes the formation of acetyl phosphate from acetate and ATP. Can also catalyze the reverse reaction. The protein is Acetate kinase of Clostridium botulinum (strain Okra / Type B1).